The following is an 89-amino-acid chain: MSALYDNEAKIRQAVGMLQKIVNDTSVPRNIRRAATDAIRNLQDQTLSPAVRAANAIGILEEISQDPNMPMHTRIAIWNVVSMLETVKD.

The protein belongs to the UPF0147 family.

This Sulfolobus acidocaldarius (strain ATCC 33909 / DSM 639 / JCM 8929 / NBRC 15157 / NCIMB 11770) protein is UPF0147 protein Saci_0891.